The following is a 492-amino-acid chain: N-succinylglutamate 5-semialdehyde dehydrogenase (492 aa).

Gly220–Gly225 is an NAD(+) binding site. Catalysis depends on residues Glu243 and Cys277.

This sequence belongs to the aldehyde dehydrogenase family. AstD subfamily.

The enzyme catalyses N-succinyl-L-glutamate 5-semialdehyde + NAD(+) + H2O = N-succinyl-L-glutamate + NADH + 2 H(+). It participates in amino-acid degradation; L-arginine degradation via AST pathway; L-glutamate and succinate from L-arginine: step 4/5. Its function is as follows. Catalyzes the NAD-dependent reduction of succinylglutamate semialdehyde into succinylglutamate. The sequence is that of N-succinylglutamate 5-semialdehyde dehydrogenase from Escherichia coli O139:H28 (strain E24377A / ETEC).